We begin with the raw amino-acid sequence, 287 residues long: Protease HtpX homolog (287 aa).

The next 2 membrane-spanning stretches (helical) occupy residues 4–24 (VGLFLATNLAILLLLGLVMSL) and 35–53 (LLLMAGCFGMGGSLISLAL). Histidine 139 provides a ligand contact to Zn(2+). The active site involves glutamate 140. Position 143 (histidine 143) interacts with Zn(2+). A run of 2 helical transmembrane segments spans residues 147–167 (GDMVTLSLIQGVLNTFVIFLS) and 194–214 (AVSMLLEFVFGLFASMIVMWF). Position 219 (glutamate 219) interacts with Zn(2+).

It belongs to the peptidase M48B family. Requires Zn(2+) as cofactor.

It localises to the cell inner membrane. The sequence is that of Protease HtpX homolog from Desulfotalea psychrophila (strain LSv54 / DSM 12343).